A 49-amino-acid chain; its full sequence is MAKRKANHVIPGMNAAKAQGMGAGYNEEFSNEPLTEAQRQNNKKRKKNQ.

A disordered region spans residues 24–49 (GYNEEFSNEPLTEAQRQNNKKRKKNQ).

The protein belongs to the SspO family.

The protein resides in the spore core. The chain is Small, acid-soluble spore protein O from Geobacillus kaustophilus (strain HTA426).